A 248-amino-acid chain; its full sequence is MQFDVVTLFPEMFTAITQSGITRRAFEQKKCELALWNPRDFTSDRHRTVDDRPYGGGPGMVMMVKPLEAAVLEAKKRQIATDLPTPRVIYLSPQGKALTHERVMQLTAEPGLVLLCGRYEAVDQRFLDVCVDEEISLGDFVLSGGELPAMALMDAVIRQLPGVLHDDASAVEDSFVNGLLDCPHYTRPEVYEGVAVPAVLMGGHHVEIEKWRRERALEATAKKRPDMIVKARAAGLLTRADEKFLSSL.

S-adenosyl-L-methionine contacts are provided by residues glycine 117 and 137–142 (LGDFVL).

It belongs to the RNA methyltransferase TrmD family. As to quaternary structure, homodimer.

It is found in the cytoplasm. The catalysed reaction is guanosine(37) in tRNA + S-adenosyl-L-methionine = N(1)-methylguanosine(37) in tRNA + S-adenosyl-L-homocysteine + H(+). Functionally, specifically methylates guanosine-37 in various tRNAs. In Herminiimonas arsenicoxydans, this protein is tRNA (guanine-N(1)-)-methyltransferase.